Here is an 820-residue protein sequence, read N- to C-terminus: Pentatricopeptide repeat-containing protein At3g22150, chloroplastic (820 aa).

Residues 1–42 form a disordered region; it reads MAGSALPLPPPPPLSLQSPSQNQTRHSSTFSPPTLTPQTPSI. The N-terminal 50 residues, 1–50, are a transit peptide targeting the chloroplast; the sequence is MAGSALPLPPPPPLSLQSPSQNQTRHSSTFSPPTLTPQTPSIRSRLSKIC. Residues 22–42 show a composition bias toward polar residues; the sequence is NQTRHSSTFSPPTLTPQTPSI. PPR repeat units follow at residues 69-99, 106-136, 141-177, 178-212, 213-247, 250-284, 285-316, 317-347, 352-382, 383-417, 418-452, 485-519, 520-550, 555-585, 586-620, 621-651, and 657-691; these read TTVL…MKKT, DAYT…LIRC, SRVV…MRRK, NVVA…EVKP, SPVS…GDEY, DLFV…NIEV, WNTM…EIVS, DEVT…VSKN, PIVI…MRER, DVVS…GFKI, DYIT…GIQF, DQAT…NIRP, NAVT…SIRQ, NVFV…TKER, NSVT…GIKP, DAIT…MREV, and SSEH…GNIA. Residues 693 to 770 are type E motif; that stretch reads LWGSLLGSCK…EVGRSGIEIA (78 aa). The tract at residues 771–801 is type E(+) motif; sequence GYVNCFVSRDQEHPHSSEIYDVIDGLAKDMR.

The protein belongs to the PPR family. PCMP-E subfamily.

Its subcellular location is the plastid. The protein resides in the chloroplast. This chain is Pentatricopeptide repeat-containing protein At3g22150, chloroplastic (PCMP-E95), found in Arabidopsis thaliana (Mouse-ear cress).